A 921-amino-acid chain; its full sequence is 2-oxoadipate dehydrogenase complex component E1 (921 aa).

N6-succinyllysine is present on residues Lys184 and Lys189. The segment at 300 to 319 (GKTRGRQQSREDGDYSPNGS) is disordered. An N6-succinyllysine mark is found at Lys801 and Lys819.

Belongs to the alpha-ketoglutarate dehydrogenase family. The 2-oxoadipate dehydrogenase complex is composed of OADH (2-oxoadipate dehydrogenase; E1a), DLST (dihydrolipoamide succinyltransferase; E2) and DLD (dihydrolipoamide dehydrogenase; E3). E1a functional unit is a dimer. It depends on thiamine diphosphate as a cofactor.

It localises to the mitochondrion. The enzyme catalyses N(6)-[(R)-lipoyl]-L-lysyl-[protein] + 2-oxoadipate + H(+) = N(6)-[(R)-S(8)-glutaryldihydrolipoyl]-L-lysyl-[protein] + CO2. Its pathway is amino-acid degradation. Its function is as follows. 2-oxoadipate dehydrogenase (E1a) component of the 2-oxoadipate dehydrogenase complex (OADHC). Participates in the first step, rate limiting for the overall conversion of 2-oxoadipate (alpha-ketoadipate) to glutaryl-CoA and CO(2) catalyzed by the whole OADHC. Catalyzes the irreversible decarboxylation of 2-oxoadipate via the thiamine diphosphate (ThDP) cofactor and subsequent transfer of the decarboxylated acyl intermediate on an oxidized dihydrolipoyl group that is covalently amidated to the E2 enzyme (dihydrolipoyllysine-residue succinyltransferase or DLST). Can catalyze the decarboxylation of 2-oxoglutarate in vitro, but at a much lower rate than 2-oxoadipate. Responsible for the last step of L-lysine, L-hydroxylysine and L-tryptophan catabolism with the common product being 2-oxoadipate. This Mus musculus (Mouse) protein is 2-oxoadipate dehydrogenase complex component E1 (Dhtkd1).